A 686-amino-acid polypeptide reads, in one-letter code: Probable metal-nicotianamine transporter YSL10 (686 aa).

The next 14 helical transmembrane spans lie at 36-56 (VTLR…VIVM), 60-80 (LTTG…FFLL), 109-129 (CVVA…IFAM), 151-171 (LGWM…SVVP), 212-232 (MLGK…FYTG), 271-291 (LVNI…WPLI), 316-336 (VFIS…KVMT), 383-403 (IPNW…IATV), 415-435 (VAVS…GCGL), 461-481 (GGII…STAS), 501-521 (FVSQ…VFWL), 556-576 (GSLP…AIAV), 597-617 (MAIP…GSLI), and 639-659 (GLIC…LAGV).

Belongs to the YSL (TC 2.A.67.2) family.

It localises to the membrane. In terms of biological role, may be involved in the transport of nicotianamine-chelated metals. In Oryza sativa subsp. japonica (Rice), this protein is Probable metal-nicotianamine transporter YSL10 (YSL10).